Here is a 214-residue protein sequence, read N- to C-terminus: GTP-binding nuclear protein GSP1/Ran (214 aa).

The Small GTPase Ran-type domain occupies Glu4–Asn168. Position 15–22 (Asp15–Thr22) interacts with GTP. Positions Lys34–Val42 are switch-I. Residues Gly65, Asn119–Asp122, and Ser147–Lys149 each bind GTP. The tract at residues Gly65–Gln81 is switch-II.

Belongs to the small GTPase superfamily. Ran family. As to quaternary structure, found in a nuclear export complex with RanGTP, exportin and pre-miRNA.

It is found in the nucleus. Functionally, GTP-binding protein involved in nucleocytoplasmic transport. Required for the import of protein into the nucleus and also for RNA export. Involved in chromatin condensation and control of cell cycle. The chain is GTP-binding nuclear protein GSP1/Ran (GSP1) from Eremothecium gossypii (strain ATCC 10895 / CBS 109.51 / FGSC 9923 / NRRL Y-1056) (Yeast).